Consider the following 139-residue polypeptide: D-ribose pyranase (139 aa).

H20 (proton donor) is an active-site residue. Substrate is bound by residues D28, H106, and Y128 to N130.

Belongs to the RbsD / FucU family. RbsD subfamily. As to quaternary structure, homodecamer.

The protein localises to the cytoplasm. The enzyme catalyses beta-D-ribopyranose = beta-D-ribofuranose. Its pathway is carbohydrate metabolism; D-ribose degradation; D-ribose 5-phosphate from beta-D-ribopyranose: step 1/2. In terms of biological role, catalyzes the interconversion of beta-pyran and beta-furan forms of D-ribose. This chain is D-ribose pyranase, found in Salmonella typhi.